We begin with the raw amino-acid sequence, 276 residues long: MIVIGRSIVHPYITNEYEPFAAEKQQILSIMAGNQEIYSFRTSDELSFDLNLRVNIITSALELFQSGFQFRTFQQSFCNPQYWKRTSLGGFELLPNIPPSIAIQDIFKNGKLYGTECATAMIIIFYKALLSLYEKETFNRLFANLLLYTWDYDQDLKLITKTGGDLVPGDLVYFKNPQVNPATIEWQGENTIYLGNFFFYGHGVGVKTKEEIIYALNERRVPYAFISAFLTDTITRIDSRLMSYHASPSTPQTSIGFIPIRDDAIVATVGNTTTVY.

The protein belongs to the bacillus TGase family.

It catalyses the reaction L-glutaminyl-[protein] + L-lysyl-[protein] = [protein]-L-lysyl-N(6)-5-L-glutamyl-[protein] + NH4(+). Probably plays a role in the assembly of the spore coat proteins by catalyzing epsilon-(gamma-glutamyl)lysine cross-links. The protein is Protein-glutamine gamma-glutamyltransferase of Bacillus anthracis (strain A0248).